We begin with the raw amino-acid sequence, 86 residues long: uncharacterized protein (86 aa).

To M.jannaschii MJ1173.

This is an uncharacterized protein from Methanosarcina mazei (strain ATCC BAA-159 / DSM 3647 / Goe1 / Go1 / JCM 11833 / OCM 88) (Methanosarcina frisia).